The chain runs to 107 residues: Large ribosomal subunit protein P1 (107 aa).

Residues 67-82 are compositionally biased toward low complexity; that stretch reads GPASAAPAGAAGAAAP. The disordered stretch occupies residues 67–107; that stretch reads GPASAAPAGAAGAAAPAEEKAEEKEEEKEESDEDMGFGLFD. Acidic residues predominate over residues 90–101; sequence KEEEKEESDEDM.

This sequence belongs to the eukaryotic ribosomal protein P1/P2 family. P1 and P2 exist as dimers at the large ribosomal subunit.

The protein localises to the cytoplasm. In terms of biological role, plays an important role in the elongation step of protein synthesis. The sequence is that of Large ribosomal subunit protein P1 from Penicillium crustosum (Blue mold fungus).